We begin with the raw amino-acid sequence, 304 residues long: tRNA pseudouridine synthase B (304 aa).

The Nucleophile role is filled by Asp40.

Belongs to the pseudouridine synthase TruB family. Type 1 subfamily.

The enzyme catalyses uridine(55) in tRNA = pseudouridine(55) in tRNA. Responsible for synthesis of pseudouridine from uracil-55 in the psi GC loop of transfer RNAs. The protein is tRNA pseudouridine synthase B of Halalkalibacterium halodurans (strain ATCC BAA-125 / DSM 18197 / FERM 7344 / JCM 9153 / C-125) (Bacillus halodurans).